A 209-amino-acid polypeptide reads, in one-letter code: Uracil phosphoribosyltransferase (209 aa).

5-phospho-alpha-D-ribose 1-diphosphate-binding positions include R79, R104, and 131–139 (DPMLATGGS). Uracil is bound by residues I194 and 199–201 (GDA). D200 provides a ligand contact to 5-phospho-alpha-D-ribose 1-diphosphate.

Belongs to the UPRTase family. Mg(2+) is required as a cofactor.

It carries out the reaction UMP + diphosphate = 5-phospho-alpha-D-ribose 1-diphosphate + uracil. The protein operates within pyrimidine metabolism; UMP biosynthesis via salvage pathway; UMP from uracil: step 1/1. Its activity is regulated as follows. Allosterically activated by GTP. Its function is as follows. Catalyzes the conversion of uracil and 5-phospho-alpha-D-ribose 1-diphosphate (PRPP) to UMP and diphosphate. The protein is Uracil phosphoribosyltransferase of Oceanobacillus iheyensis (strain DSM 14371 / CIP 107618 / JCM 11309 / KCTC 3954 / HTE831).